The chain runs to 205 residues: DNA-directed RNA polymerases IV and V subunit 4 (205 aa).

A disordered region spans residues 1–79; it reads MSEKGGKGLK…TKSSKNSLHS (79 aa). Residues 48-60 are compositionally biased toward polar residues; that stretch reads NVSSDQQPFQSSA.

Belongs to the eukaryotic RPB4 RNA polymerase subunit family. Component of the RNA polymerase IV and V complexes. Interacts with NRPD1 and NRPE1. Expressed in shoot meristematic region and in root tips. Detected in cotyledons, flowers and young leaves.

The protein localises to the nucleus. Functionally, DNA-dependent RNA polymerase catalyzes the transcription of DNA into RNA using the four ribonucleoside triphosphates as substrates. Component of RNA polymerases IV and V which mediate short-interfering RNAs (siRNA) accumulation and subsequent RNA-directed DNA methylation-dependent (RdDM) transcriptional gene silencing (TGS) of endogenous repeated sequences, including transposable elements. Required for the de novo DNA methylation directed by the RdDM pathway. The polypeptide is DNA-directed RNA polymerases IV and V subunit 4 (NRPD4) (Arabidopsis thaliana (Mouse-ear cress)).